Here is a 410-residue protein sequence, read N- to C-terminus: Peptidase T (410 aa).

Histidine 79 lines the Zn(2+) pocket. Aspartate 81 is a catalytic residue. Zn(2+) is bound at residue aspartate 142. Glutamate 176 (proton acceptor) is an active-site residue. The Zn(2+) site is built by glutamate 177, aspartate 199, and histidine 381.

The protein belongs to the peptidase M20B family. Zn(2+) is required as a cofactor.

The protein resides in the cytoplasm. It carries out the reaction Release of the N-terminal residue from a tripeptide.. Cleaves the N-terminal amino acid of tripeptides. This is Peptidase T (pepT) from Bacillus subtilis (strain 168).